The following is an 880-amino-acid chain: A-adding tRNA nucleotidyltransferase (880 aa).

2 CBS domains span residues 315–373 and 377–435; these read MSSP…NLPV and MHTE…RNAE. 487–490 is an ATP binding site; the sequence is GFVR. The Mg(2+) site is built by D500 and D502. ATP is bound by residues 574-575, N579, 619-628, R632, and R661; these read RD and DPTRVFRAIR.

The protein belongs to the tRNA nucleotidyltransferase/poly(A) polymerase family. It depends on Mg(2+) as a cofactor.

The enzyme catalyses a tRNA with a 3' CC end + ATP = a tRNA with a 3' CCA end + diphosphate. Functionally, tRNA nucleotidyltransferase involved in the synthesis of the tRNA CCA terminus. Adds the terminal adenosine residue to tRNA. In Geobacter sulfurreducens (strain ATCC 51573 / DSM 12127 / PCA), this protein is A-adding tRNA nucleotidyltransferase.